Here is a 314-residue protein sequence, read N- to C-terminus: MYNKTLRIATRKSPLALKQTKYVQKKILSLYPDLNIKLVPIVTHGDNILNKSLSKIGGKGLFIKELELALLENKADIAIHSMKDLPVKITKELCLVSICKRGNALDSLVSNNYQSINQLPKGAIVGTSSLRRQCQLITYRPDLIISPLRGNIETRIAKLDQGKYDAIILATEGLNRLRLKNRITQIIPAELSLPSCGQGAIGIQSRLHDKKVLFFLSRLNHINTFIEINAERAFCRKLESGCQIPIGSYAILKKNKIWLRGLVGSPNGKIILKGERIGCYNTGEKMGYSLADELLKNGAKNILNNLHIKQSYCI.

An S-(dipyrrolylmethanemethyl)cysteine modification is found at Cys242.

The protein belongs to the HMBS family. In terms of assembly, monomer. Dipyrromethane serves as cofactor.

The catalysed reaction is 4 porphobilinogen + H2O = hydroxymethylbilane + 4 NH4(+). It functions in the pathway porphyrin-containing compound metabolism; protoporphyrin-IX biosynthesis; coproporphyrinogen-III from 5-aminolevulinate: step 2/4. In terms of biological role, tetrapolymerization of the monopyrrole PBG into the hydroxymethylbilane pre-uroporphyrinogen in several discrete steps. This chain is Porphobilinogen deaminase (hemC), found in Buchnera aphidicola subsp. Acyrthosiphon pisum (strain APS) (Acyrthosiphon pisum symbiotic bacterium).